We begin with the raw amino-acid sequence, 497 residues long: Acetyltransferase adrJ (497 aa).

Catalysis depends on proton acceptor residues His-174 and Asp-422. The tract at residues 430–451 (SSAQSSSQNTQKKGKPSYVNGV) is disordered.

It belongs to the plant acyltransferase family. In terms of assembly, monomer.

It participates in secondary metabolite biosynthesis; terpenoid biosynthesis. Functionally, acetyltransferase; part of the gene cluster that mediates the biosynthesis of andrastins, meroterpenoid compounds that exhibit inhibitory activity against ras farnesyltransferase, suggesting that they could be promising leads for antitumor agents. The first step of the pathway is the synthesis of 3,5-dimethylorsellinic acid (DMOA) by the polyketide synthase adrD via condensation of one acetyl-CoA starter unit with 3 malonyl-CoA units and 2 methylations. DMAO is then converted to farnesyl-DMAO by the prenyltransferase adrG. The methyltransferase adrK catalyzes the methylation of the carboxyl group of farnesyl-DMAO to farnesyl-DMAO methyl ester which is further converted to epoxyfarnesyl-DMAO methyl ester by the FAD-dependent monooxygenase adrH. The terpene cyclase adrI then catalyzes the carbon skeletal rearrangement to generate the andrastin E, the first compound in the pathway having the andrastin scaffold, with the tetracyclic ring system. The post-cyclization tailoring enzymes adrF, adrE, adrJ, and adrA, are involved in the conversion of andrastin E into andrastin A. The short chain dehydrogenase adrF is responsible for the oxidation of the C-3 a hydroxyl group of andrastin E to yield the corresponding ketone, andrastin D. The ketoreductase adrE stereoselectively reduces the carbonyl moiety to reverse the stereochemistry of the C-3 position to yield andrastin F. The acetyltransferase adrJ is the acetyltransferase that attaches the acetyl group to the C-3 hydroxyl group of andrastin F to yield andrastin C. Finally, the cytochrome P450 monooxygenase adrA catalyzes two sequential oxidation reactions of the C-23 methyl group, to generate the corresponding alcohol andrastin B, and aldehyde andrastin A. The chain is Acetyltransferase adrJ from Penicillium rubens (strain ATCC 28089 / DSM 1075 / NRRL 1951 / Wisconsin 54-1255) (Penicillium chrysogenum).